A 294-amino-acid chain; its full sequence is Nucleoside-specific channel-forming protein Tsx (294 aa).

The N-terminal stretch at 1 to 22 (MKKTLLAASAVVALSASFTAGA) is a signal peptide.

Belongs to the nucleoside-specific channel-forming outer membrane porin (Tsx) (TC 1.B.10) family.

The protein resides in the cell outer membrane. Functions as a substrate-specific channel for nucleosides and deoxynucleosides. Also functions in albicidin uptake and as receptor for colicin K. Also is a receptor for several Tsx-specific bacteriophages. This is Nucleoside-specific channel-forming protein Tsx from Klebsiella aerogenes (strain ATCC 13048 / DSM 30053 / CCUG 1429 / JCM 1235 / KCTC 2190 / NBRC 13534 / NCIMB 10102 / NCTC 10006 / CDC 819-56) (Enterobacter aerogenes).